We begin with the raw amino-acid sequence, 216 residues long: Histidine biosynthesis bifunctional protein HisIE (216 aa).

The phosphoribosyl-AMP cyclohydrolase stretch occupies residues 1 to 127 (MSFIDSLSPQ…GKIVAPPGDT (127 aa)). The interval 128-216 (LSQVFQVICD…VYRKLQERRR (89 aa)) is phosphoribosyl-ATP pyrophosphohydrolase.

It in the N-terminal section; belongs to the PRA-CH family. This sequence in the C-terminal section; belongs to the PRA-PH family.

It is found in the cytoplasm. The catalysed reaction is 1-(5-phospho-beta-D-ribosyl)-ATP + H2O = 1-(5-phospho-beta-D-ribosyl)-5'-AMP + diphosphate + H(+). It carries out the reaction 1-(5-phospho-beta-D-ribosyl)-5'-AMP + H2O = 1-(5-phospho-beta-D-ribosyl)-5-[(5-phospho-beta-D-ribosylamino)methylideneamino]imidazole-4-carboxamide. It participates in amino-acid biosynthesis; L-histidine biosynthesis; L-histidine from 5-phospho-alpha-D-ribose 1-diphosphate: step 2/9. It functions in the pathway amino-acid biosynthesis; L-histidine biosynthesis; L-histidine from 5-phospho-alpha-D-ribose 1-diphosphate: step 3/9. In Nostoc sp. (strain PCC 7120 / SAG 25.82 / UTEX 2576), this protein is Histidine biosynthesis bifunctional protein HisIE (hisI).